The sequence spans 1904 residues: Pericentriolar material 1 protein (1904 aa).

Disordered stretches follow at residues 1-135, 159-179, 265-303, 338-361, 376-407, 430-489, and 520-559; these read MATG…SGEP, QEDG…PQQE, HDSQ…QSDE, NSSF…TSAA, NSLA…EKLQ, SDMM…GTNN, and CHNR…LGDV. Over residues 43-60 the composition is skewed to basic and acidic residues; that stretch reads RSSEKNKKKLGGEAETRL. Residues 107–118 show a composition bias toward polar residues; sequence INFSDLDQINTN. Positions 171-212 form a coiled coil; it reads SQARDPQQEAKEELENLKKQHDLLKRMLQQQEQLKALQGRQA. Over residues 280-298 the composition is skewed to polar residues; sequence ESLSLTREISQSRNSSVSE. A coiled-coil region spans residues 301–334; it reads SDEKAQLFNKMRMLQGKKQKMDKLLGELHTLRDQ. Low complexity predominate over residues 338-348; the sequence is NSSFFPASSSP. A compositionally biased stretch (polar residues) spans 349-361; the sequence is QRSIDQRSTTSAA. The stretch at 403–429 forms a coiled coil; that stretch reads TEKLQKLNEVRKRLNELRELVHYYEQT. Residues 442 to 452 are compositionally biased toward acidic residues; it reads KEEEETEDSGS. The span at 461 to 470 shows a compositional bias: polar residues; it reads PVTNIRNPQG. Low complexity predominate over residues 471–482; the sequence is ISSWSEINSNSN. Basic and acidic residues predominate over residues 520-534; it reads CHNREDDKHADLPHG. The span at 535–544 shows a compositional bias: acidic residues; the sequence is EDDEVEEDRA. 2 coiled-coil regions span residues 562 to 592 and 636 to 686; these read DAEF…VQDD and LNEK…LQSA. Residues 686–706 form a disordered region; sequence AGLGNSPANRQTSPATSTPAM. Over residues 687 to 706 the composition is skewed to polar residues; sequence GLGNSPANRQTSPATSTPAM. A coiled-coil region spans residues 731–768; it reads SEMRRHEILREELRRRRKQLEALMAEHQRRRELAETIS. A disordered region spans residues 773 to 840; that stretch reads SVKSEGSEAQ…PSMNDSFSAY (68 aa). Over residues 779-804 the composition is skewed to polar residues; it reads SEAQRTPQQSRTENRTMATWGGSTQC. The span at 806–830 shows a compositional bias: acidic residues; the sequence is LDEEDGDEDGYLSDGLDQAEEEEDA. Coiled-coil stretches lie at residues 895-927 and 970-1000; these read SELS…CQTL and TQLS…CQEK. Disordered stretches follow at residues 991–1018, 1063–1082, and 1088–1225; these read HQQE…SPVF, GFPQ…ASGK, and FPKP…TGYD. 2 stretches are compositionally biased toward polar residues: residues 1064–1073 and 1093–1102; these read FPQSSEQQQH and ESSSSTGAEN. A compositionally biased stretch (basic and acidic residues) spans 1103–1117; that stretch reads QRSHRQPEDEVEKRS. Residues 1141–1150 show a composition bias toward polar residues; sequence SVQSIASGHK. Over residues 1151 to 1162 the composition is skewed to basic and acidic residues; it reads NQSDTSRRRNFD. Residues 1173–1182 are compositionally biased toward low complexity; it reads PDPVDPTTVT. Positions 1421-1447 form a coiled coil; the sequence is IHLDQALARMREYERMKIEAESTLDSE. A compositionally biased stretch (basic and acidic residues) spans 1616–1625; sequence AKEDKDETET. 3 disordered regions span residues 1616 to 1741, 1774 to 1838, and 1865 to 1904; these read AKED…VKGE, MKTE…SDED, and EAQT…AQSA. The span at 1649–1658 shows a compositional bias: acidic residues; the sequence is SDQEEDEESE. Residues 1668-1678 show a composition bias toward polar residues; that stretch reads KAETQALTNYG. The segment covering 1680–1695 has biased composition (acidic residues); that stretch reads GEDENEDEEIEFEEGP. Composition is skewed to polar residues over residues 1698–1720, 1728–1737, and 1779–1791; these read VQTS…SQEL, ILSSEQQSVN, and SSSS…TQML. Positions 1800–1812 are enriched in low complexity; it reads SSAGSSESSMAGS. Positions 1881-1897 are enriched in basic and acidic residues; sequence EQDRELVGDAQTLKEPE.

It belongs to the PCM1 family. Self-associates.

It is found in the cytoplasm. Its subcellular location is the cytoskeleton. The protein resides in the microtubule organizing center. The protein localises to the centrosome. It localises to the cytoplasmic granule. It is found in the centriolar satellite. Its subcellular location is the cilium basal body. Functionally, required for centrosome assembly and function. Essential for the correct localization of several centrosomal proteins including CETN3 and PCNT. Required to anchor microtubules to the centrosome. Probably involved in the biogenesis of cilia. This Gallus gallus (Chicken) protein is Pericentriolar material 1 protein (PCM1).